Here is a 596-residue protein sequence, read N- to C-terminus: Sensor protein ChvG (596 aa).

Residues 1-22 are disordered; the sequence is MLKKTPETVSDSDDAEERGSER. At 1-47 the chain is on the cytoplasmic side; that stretch reads MLKKTPETVSDSDDAEERGSERRHRIHPLTIIRRIFGNAVFSSLTRR. A helical transmembrane segment spans residues 48 to 68; the sequence is ILFFNVAATVVLVGGILYLNQ. The Periplasmic portion of the chain corresponds to 69-283; it reads FREGLIDARV…VHAERLAIMR (215 aa). The chain crosses the membrane as a helical span at residues 284–304; sequence VFGIATLVNIVLSLLLSSTIA. The HAMP domain maps to 301–356; the sequence is STIATPLRRLSAAAIRVRRGARTREEIPDFSARQDEIGNLSIALREMTTALYDRID. The Cytoplasmic portion of the chain corresponds to 305–596; it reads TPLRRLSAAA…SLPAAETHER (292 aa). The region spanning 364-592 is the Histidine kinase domain; it reads DVSHELKNPL…RFTLSLPAAE (229 aa). His-367 carries the post-translational modification Phosphohistidine.

Its subcellular location is the cell inner membrane. The catalysed reaction is ATP + protein L-histidine = ADP + protein N-phospho-L-histidine.. Functionally, member of a two-component regulatory system ChvG/ChvI. Activates ChvI by phosphorylation (Potential). In Agrobacterium fabrum (strain C58 / ATCC 33970) (Agrobacterium tumefaciens (strain C58)), this protein is Sensor protein ChvG (chvG).